Reading from the N-terminus, the 546-residue chain is MTPGEIRRLYFIIKTFLSYGLDELIPRMRLTLPLRIWRRGLFWMPNRHKDLELGTRLRLALQELGPVWIKFGQMLSTRRDLFPPVIADQLALLQDRVAPFDGKLAKQQIEKAMGDRPVEEWFDDFDITPLASASIAQVHTARLKENGKEVVIKVIRPDILPVIKADMKLIYRLARWVPRLLPDGRRLRPMEVVREYEKTLLDELDLLREAANAIQLRRNFENSPMLYVPEVYSDYCSPTMMVMERIYGIPVNDVAALEANGTDMKLLAERGVQVFFTQVFRDSFFHGDMHPGNIFVSHDHPHDPQYIGIDCGIVGSLNKEDKRYLAENFIAFFNRDYRRVAELHVDSGWVPPDTNVEEFESAIRTVCEPIFEKPLAEISFGHVLLNLFNTARRFNMEVQPQLVLLQKTLLYIEGVGRQLYPQLDLWKTAKPFLESWIKDQVGFPALVRSFKEKAPFWAEKIPEIPELVYNSLRQGKQLQQSVDKIAHELQEHRVKQGQSRYLFGIGATLMLSSTLLFINRPDWGMSPGWLMAGGILVWLIGWRRTD.

The region spanning 124–502 (DFDITPLASA…RVKQGQSRYL (379 aa)) is the Protein kinase domain. ATP is bound by residues 130–138 (LASASIAQV) and Lys153. Catalysis depends on Asp288, which acts as the Proton acceptor. 2 helical membrane passes run 501 to 518 (YLFGIGATLMLSSTLLFI) and 523 to 542 (WGMSPGWLMAGGILVWLIGW).

Belongs to the ABC1 family. UbiB subfamily.

Its subcellular location is the cell inner membrane. It functions in the pathway cofactor biosynthesis; ubiquinone biosynthesis [regulation]. Is probably a protein kinase regulator of UbiI activity which is involved in aerobic coenzyme Q (ubiquinone) biosynthesis. This Cronobacter sakazakii (strain ATCC BAA-894) (Enterobacter sakazakii) protein is Probable protein kinase UbiB.